Here is a 458-residue protein sequence, read N- to C-terminus: NADH-ubiquinone oxidoreductase chain 4 (458 aa).

Helical transmembrane passes span 23-43, 59-79, 99-119, 148-168, 174-194, 197-217, 227-247, 260-280, 289-311, 315-337, 355-375, 396-416, and 438-458; these read LLWT…TLTL, IDQF…LTIM, LLIL…LLMF, LYFL…LIMI, SLSI…TPWS, LWWI…IFHL, PIAG…YGMI, LAVP…SICL, IAYS…TPWA, ALAM…NITY, FPLM…LPPF, ILLL…MLIM, and LMLM…AIMI.

Belongs to the complex I subunit 4 family.

It is found in the mitochondrion membrane. It carries out the reaction a ubiquinone + NADH + 5 H(+)(in) = a ubiquinol + NAD(+) + 4 H(+)(out). Functionally, core subunit of the mitochondrial membrane respiratory chain NADH dehydrogenase (Complex I) that is believed to belong to the minimal assembly required for catalysis. Complex I functions in the transfer of electrons from NADH to the respiratory chain. The immediate electron acceptor for the enzyme is believed to be ubiquinone. This is NADH-ubiquinone oxidoreductase chain 4 (MT-ND4) from Petromyzon marinus (Sea lamprey).